Here is a 229-residue protein sequence, read N- to C-terminus: Demethylmenaquinone methyltransferase (229 aa).

Residues threonine 58, aspartate 78, and 100–101 (DA) contribute to the S-adenosyl-L-methionine site.

The protein belongs to the class I-like SAM-binding methyltransferase superfamily. MenG/UbiE family.

It carries out the reaction a 2-demethylmenaquinol + S-adenosyl-L-methionine = a menaquinol + S-adenosyl-L-homocysteine + H(+). It functions in the pathway quinol/quinone metabolism; menaquinone biosynthesis; menaquinol from 1,4-dihydroxy-2-naphthoate: step 2/2. Methyltransferase required for the conversion of demethylmenaquinol (DMKH2) to menaquinol (MKH2). The chain is Demethylmenaquinone methyltransferase from Thermotoga maritima (strain ATCC 43589 / DSM 3109 / JCM 10099 / NBRC 100826 / MSB8).